The chain runs to 427 residues: ATP-dependent RNA helicase DDX39A (427 aa).

The span at 1-19 shows a compositional bias: acidic residues; it reads MAEQDVENELLDYDEDEEP. Residues 1–36 are disordered; that stretch reads MAEQDVENELLDYDEDEEPQAPQESTPAPPKKDVKG. The residue at position 2 (alanine 2) is an N-acetylalanine. Lysine 31 is covalently cross-linked (Glycyl lysine isopeptide (Lys-Gly) (interchain with G-Cter in SUMO2)). Lysine 35 is modified (N6-acetyllysine; alternate). Residue lysine 35 forms a Glycyl lysine isopeptide (Lys-Gly) (interchain with G-Cter in SUMO2); alternate linkage. Residue serine 37 is modified to Phosphoserine. The short motif at 44–72 is the Q motif element; the sequence is SGFRDFLLKPELLRAIVDCGFEHPSEVQH. One can recognise a Helicase ATP-binding domain in the interval 75 to 248; it reads IPQAILGMDV…RKFMQDPMEV (174 aa). 88-95 contacts ATP; sequence AKSGMGKT. Residues lysine 154 and lysine 162 each participate in a glycyl lysine isopeptide (Lys-Gly) (interchain with G-Cter in SUMO2) cross-link. The residue at position 171 (threonine 171) is a Phosphothreonine. The DECD box motif lies at 195–198; the sequence is DECD. Residues lysine 240 and lysine 255 each participate in a glycyl lysine isopeptide (Lys-Gly) (interchain with G-Cter in SUMO2) cross-link. In terms of domain architecture, Helicase C-terminal spans 260 to 421; that stretch reads GLQQYYVKLK…ELPEEIDIST (162 aa). Serine 426 carries the post-translational modification Phosphoserine.

The protein belongs to the DEAD box helicase family. DECD subfamily. In terms of assembly, binds ALYREF/THOC4 and DDX39B/BAT1. Interacts with the apo-AREX complex component SARNP. Interacts with MX1. Interacts with MCM3AP isoform GANP. Interacts with ECD. Interacts with PHAX; this interaction stimulates PHAX RNA binding activity. SUMOylated by RANBP2; SUMOylation modification affects its ability to bind RNA.

The protein resides in the nucleus. It localises to the cytoplasm. It carries out the reaction ATP + H2O = ADP + phosphate + H(+). In terms of biological role, helicase that plays an essential role in mRNA export and is involved in multiple steps in RNA metabolism including alternative splicing. Regulates nuclear mRNA export to the cytoplasm through association with ECD. Also involved in spliceosomal uridine-rich small nuclear RNA (U snRNA) export by stimulating the RNA binding of adapter PHAX. Plays a role in the negative regulation of type I IFN production by increasing the nuclear retention of antiviral transcripts and thus reducing their protein expression. Independently of the interferon pathway, plays an antiviral role against alphaviruses by binding to a 5' conserved sequence element in the viral genomic RNA. This Mus musculus (Mouse) protein is ATP-dependent RNA helicase DDX39A.